The primary structure comprises 772 residues: Mitochondrial intermediate peptidase (772 aa).

The N-terminal 37 residues, 1-37, are a transit peptide targeting the mitochondrion; sequence MLRTIILKAGSNASIPSLSRQNKLLRFFATAGAVSRT. H558 is a binding site for Zn(2+). The active site involves E559. Zn(2+) contacts are provided by H562 and H565.

Belongs to the peptidase M3 family. Zn(2+) is required as a cofactor.

It localises to the mitochondrion matrix. The catalysed reaction is Release of an N-terminal octapeptide as second stage of processing of some proteins imported into the mitochondrion.. Stimulated by Fe(2+). In terms of biological role, cleaves proteins, imported into the mitochondrion, to their mature size. While most mitochondrial precursor proteins are processed to the mature form in one step by mitochondrial processing peptidase (MPP), the sequential cleavage by MIP of an octapeptide after initial processing by MPP is a required step for a subgroup of nuclear-encoded precursor proteins destined for the matrix or the inner membrane. Cleaves precursor proteins of respiratory components, including subunits of the electron transport chain and tricarboxylic acid cycle enzymes, and components of the mitochondrial genetic machinery, including ribosomal proteins, translation factors, and proteins required for mitochondrial DNA metabolism. This Saccharomyces cerevisiae (strain YJM789) (Baker's yeast) protein is Mitochondrial intermediate peptidase (OCT1).